Reading from the N-terminus, the 344-residue chain is Phosphoribosylformylglycinamidine cyclo-ligase (344 aa).

It belongs to the AIR synthase family.

It localises to the cytoplasm. The catalysed reaction is 2-formamido-N(1)-(5-O-phospho-beta-D-ribosyl)acetamidine + ATP = 5-amino-1-(5-phospho-beta-D-ribosyl)imidazole + ADP + phosphate + H(+). The protein operates within purine metabolism; IMP biosynthesis via de novo pathway; 5-amino-1-(5-phospho-D-ribosyl)imidazole from N(2)-formyl-N(1)-(5-phospho-D-ribosyl)glycinamide: step 2/2. The polypeptide is Phosphoribosylformylglycinamidine cyclo-ligase (Haemophilus influenzae (strain PittGG)).